The sequence spans 437 residues: Trigger factor (437 aa).

One can recognise a PPIase FKBP-type domain in the interval 161-246 (DDQVNIDFVG…VNSVSAPVLP (86 aa)).

The protein belongs to the FKBP-type PPIase family. Tig subfamily.

The protein localises to the cytoplasm. It catalyses the reaction [protein]-peptidylproline (omega=180) = [protein]-peptidylproline (omega=0). Involved in protein export. Acts as a chaperone by maintaining the newly synthesized protein in an open conformation. Functions as a peptidyl-prolyl cis-trans isomerase. The protein is Trigger factor of Pseudomonas putida (strain ATCC 47054 / DSM 6125 / CFBP 8728 / NCIMB 11950 / KT2440).